A 182-amino-acid polypeptide reads, in one-letter code: Lipoprotein signal peptidase (182 aa).

A run of 4 helical transmembrane segments spans residues 12-32, 40-60, 70-90, and 97-117; these read FLWI…TVID, IQVL…AFSF, WFFT…LKQS, and LPVA…DRLV. Catalysis depends on residues Asp-123 and Asp-141. Residues 136-156 form a helical membrane-spanning segment; it reads AFNIADSAIFIGAALLIIDMF. The disordered stretch occupies residues 161-182; sequence KKSEENGAESKAGSANSSETIK. The segment covering 173-182 has biased composition (polar residues); it reads GSANSSETIK.

It belongs to the peptidase A8 family.

The protein resides in the cell inner membrane. The catalysed reaction is Release of signal peptides from bacterial membrane prolipoproteins. Hydrolyzes -Xaa-Yaa-Zaa-|-(S,diacylglyceryl)Cys-, in which Xaa is hydrophobic (preferably Leu), and Yaa (Ala or Ser) and Zaa (Gly or Ala) have small, neutral side chains.. It participates in protein modification; lipoprotein biosynthesis (signal peptide cleavage). Functionally, this protein specifically catalyzes the removal of signal peptides from prolipoproteins. The polypeptide is Lipoprotein signal peptidase (Alteromonas mediterranea (strain DSM 17117 / CIP 110805 / LMG 28347 / Deep ecotype)).